The chain runs to 1009 residues: Protein-tyrosine kinase 2-beta (1009 aa).

The FERM domain maps to 39–359 (RILKVCFYSN…GYCRLQGEHK (321 aa)). Phosphoserine occurs at positions 361, 375, and 399. Y402 bears the Phosphotyrosine; by autocatalysis mark. Positions 425 to 683 (VVLNRILGEG…ELVCSLSDIY (259 aa)) constitute a Protein kinase domain. Residues 431 to 439 (LGEGFFGEV), K457, and 503 to 509 (ELYPYGE) contribute to the ATP site. D549 acts as the Proton acceptor in catalysis. Phosphotyrosine occurs at positions 579, 580, and 722. The disordered stretch occupies residues 702–725 (PKILEPTAFQEPPPKPSRPKYKHP). S762 is modified (phosphoserine). T765 bears the Phosphothreonine mark. The segment at 801–1009 (KIKMRQVLDR…VANLAHPPAE (209 aa)) is interaction with TGFB1I1. Position 834 is a phosphotyrosine (Y834). S839 carries the phosphoserine modification. Residue T842 is modified to Phosphothreonine. Y849 carries the phosphotyrosine modification. Position 866 is a phosphoserine (S866). Residues 868 to 1009 (QPTANLDRTD…VANLAHPPAE (142 aa)) are focal adhesion targeting (FAT). Y881 is modified (phosphotyrosine).

The protein belongs to the protein kinase superfamily. Tyr protein kinase family. FAK subfamily. In terms of assembly, homodimer, or homooligomer. Interacts with NPHP1, ASAP1, ASAP2, ARHGAP26, SKAP2 and TGFB1I1. The Tyr-402 phosphorylated form interacts with SRC (via SH2 domain) and SRC family members. Forms a signaling complex with EPHA1, LCK and phosphatidylinositol 3-kinase; upon activation by EFNA1. Interacts with GRB2 (via SH2 domain). Interacts with P53/TP53 and MDM2. Interacts with MYLK. Interacts with BCAR1. Interacts with RB1CC1. Interacts with RHOU. Interacts with VAV1. Interacts with PDPK1. Interacts with LPXN and PTPN12. Interacts with SIRPA and SH2D3C. Interacts (hypophosphorylated) with PXN. Interacts with ARHGAP10. Interacts with KCNA2. In terms of processing, phosphorylated on tyrosine residues in response to various stimuli that elevate the intracellular calcium concentration; this activation is indirect and may be mediated by production of reactive oxygen species (ROS). Tyr-402 is the major autophosphorylation site, but other kinases can also phosphorylate Tyr-402. Autophosphorylation occurs in trans, i.e. one subunit of the dimeric receptor phosphorylates tyrosine residues on the other subunit. Phosphorylation at Tyr-402 promotes interaction with SRC and SRC family members, leading to phosphorylation at Tyr-579; Tyr-580 and Tyr-881. Phosphorylation at Tyr-881 is important for interaction with GRB2. Phosphorylated on tyrosine residues upon activation of FGR and PKC. Recruitment by NPHP1 to cell matrix adhesions initiates Tyr-402 phosphorylation. In monocytes, adherence to substrata is required for tyrosine phosphorylation and kinase activation. Angiotensin II, thapsigargin and L-alpha-lysophosphatidic acid (LPA) also induce autophosphorylation and increase kinase activity. Phosphorylation by MYLK promotes ITGB2 activation and is thus essential to trigger neutrophil transmigration during lung injury. Dephosphorylated by PTPN12. In terms of tissue distribution, highly expressed in pulmonary vein endothelial cells, lung and brain (at protein level). Isoform 1 is expressed at high levels in the brain (hippocampus, cerebral cortex and olfactory bulb) and poorly in the spleen and other tissues, whereas isoforms 2 and 3 are expressed in the spleen and brain (highest in cerebellum).

The protein localises to the cytoplasm. Its subcellular location is the perinuclear region. The protein resides in the cell membrane. It localises to the cell projection. It is found in the lamellipodium. The protein localises to the cell cortex. Its subcellular location is the nucleus. The protein resides in the cell junction. It localises to the focal adhesion. It catalyses the reaction L-tyrosyl-[protein] + ATP = O-phospho-L-tyrosyl-[protein] + ADP + H(+). Activated in response to stimuli that lead to increased intracellular Ca(2+) levels; this activation is indirect and may be mediated by calcium-mediated production of reactive oxygen species (ROS). Activated by autophosphorylation at Tyr-402; this creates a binding site for SRC family kinases and leads to phosphorylation at additional tyrosine residues. Phosphorylation at Tyr-402, Tyr-579 and Tyr-580 is required for optimal kinase activity. Functionally, non-receptor protein-tyrosine kinase that regulates reorganization of the actin cytoskeleton, cell polarization, cell migration, adhesion, spreading and bone remodeling. Plays a role in the regulation of the humoral immune response, and is required for normal levels of marginal B-cells in the spleen and normal migration of splenic B-cells. Required for normal macrophage polarization and migration towards sites of inflammation. Regulates cytoskeleton rearrangement and cell spreading in T-cells, and contributes to the regulation of T-cell responses. Promotes osteoclastic bone resorption; this requires both PTK2B/PYK2 and SRC. May inhibit differentiation and activity of osteoprogenitor cells. Functions in signaling downstream of integrin and collagen receptors, immune receptors, G-protein coupled receptors (GPCR), cytokine, chemokine and growth factor receptors, and mediates responses to cellular stress. Forms multisubunit signaling complexes with SRC and SRC family members upon activation; this leads to the phosphorylation of additional tyrosine residues, creating binding sites for scaffold proteins, effectors and substrates. Regulates numerous signaling pathways. Promotes activation of phosphatidylinositol 3-kinase and of the AKT1 signaling cascade. Promotes activation of NOS3. Regulates production of the cellular messenger cGMP. Promotes activation of the MAP kinase signaling cascade, including activation of MAPK1/ERK2, MAPK3/ERK1 and MAPK8/JNK1. Promotes activation of Rho family GTPases, such as RHOA and RAC1. Recruits the ubiquitin ligase MDM2 to P53/TP53 in the nucleus, and thereby regulates P53/TP53 activity, P53/TP53 ubiquitination and proteasomal degradation. Acts as a scaffold, binding to both PDPK1 and SRC, thereby allowing SRC to phosphorylate PDPK1 at 'Tyr-9, 'Tyr-373', and 'Tyr-376'. Promotes phosphorylation of NMDA receptors by SRC family members, and thereby contributes to the regulation of NMDA receptor ion channel activity and intracellular Ca(2+) levels. May also regulate potassium ion transport by phosphorylation of potassium channel subunits. Phosphorylates SRC; this increases SRC kinase activity. Phosphorylates ASAP1, NPHP1, KCNA2 and SHC1. Promotes phosphorylation of ASAP2, RHOU and PXN; this requires both SRC and PTK2/PYK2. This is Protein-tyrosine kinase 2-beta (Ptk2b) from Rattus norvegicus (Rat).